The chain runs to 95 residues: Pyrimidine/purine nucleoside phosphorylase (95 aa).

This sequence belongs to the nucleoside phosphorylase PpnP family.

It catalyses the reaction a purine D-ribonucleoside + phosphate = a purine nucleobase + alpha-D-ribose 1-phosphate. The enzyme catalyses adenosine + phosphate = alpha-D-ribose 1-phosphate + adenine. The catalysed reaction is cytidine + phosphate = cytosine + alpha-D-ribose 1-phosphate. It carries out the reaction guanosine + phosphate = alpha-D-ribose 1-phosphate + guanine. It catalyses the reaction inosine + phosphate = alpha-D-ribose 1-phosphate + hypoxanthine. The enzyme catalyses thymidine + phosphate = 2-deoxy-alpha-D-ribose 1-phosphate + thymine. The catalysed reaction is uridine + phosphate = alpha-D-ribose 1-phosphate + uracil. It carries out the reaction xanthosine + phosphate = alpha-D-ribose 1-phosphate + xanthine. In terms of biological role, catalyzes the phosphorolysis of diverse nucleosides, yielding D-ribose 1-phosphate and the respective free bases. Can use uridine, adenosine, guanosine, cytidine, thymidine, inosine and xanthosine as substrates. Also catalyzes the reverse reactions. This Enterobacter sp. (strain 638) protein is Pyrimidine/purine nucleoside phosphorylase.